A 488-amino-acid polypeptide reads, in one-letter code: Inosine-5'-monophosphate dehydrogenase (488 aa).

CBS domains are found at residues 94-150 (IVSE…SKTV) and 154-215 (MTKK…CKDE). NAD(+) contacts are provided by residues Asp-249, 249-251 (DSS), and 299-301 (GIG). K(+)-binding residues include Gly-301 and Gly-303. Ser-304 contacts IMP. Residue Cys-306 coordinates K(+). Cys-306 acts as the Thioimidate intermediate in catalysis. IMP is bound by residues 339–341 (DGG), 362–363 (GS), and 386–390 (YRGMG). Catalysis depends on Arg-402, which acts as the Proton acceptor. IMP is bound at residue Glu-416. K(+) contacts are provided by Glu-470, Ser-471, and His-472.

Belongs to the IMPDH/GMPR family. Homotetramer. K(+) is required as a cofactor.

It catalyses the reaction IMP + NAD(+) + H2O = XMP + NADH + H(+). It participates in purine metabolism; XMP biosynthesis via de novo pathway; XMP from IMP: step 1/1. Its activity is regulated as follows. Mycophenolic acid (MPA) is a non-competitive inhibitor that prevents formation of the closed enzyme conformation by binding to the same site as the amobile flap. In contrast, mizoribine monophosphate (MZP) is a competitive inhibitor that induces the closed conformation. MPA is a potent inhibitor of mammalian IMPDHs but a poor inhibitor of the bacterial enzymes. MZP is a more potent inhibitor of bacterial IMPDH. Its function is as follows. Catalyzes the conversion of inosine 5'-phosphate (IMP) to xanthosine 5'-phosphate (XMP), the first committed and rate-limiting step in the de novo synthesis of guanine nucleotides, and therefore plays an important role in the regulation of cell growth. The polypeptide is Inosine-5'-monophosphate dehydrogenase (Haemophilus influenzae (strain ATCC 51907 / DSM 11121 / KW20 / Rd)).